Consider the following 601-residue polypeptide: Probable sphingosine-1-phosphate lyase (601 aa).

Lysine 360 is subject to N6-(pyridoxal phosphate)lysine.

The protein belongs to the group II decarboxylase family. Sphingosine-1-phosphate lyase subfamily. Pyridoxal 5'-phosphate is required as a cofactor.

It carries out the reaction sphinganine 1-phosphate = hexadecanal + phosphoethanolamine. In terms of biological role, cleaves phosphorylated sphingoid bases (PSBs), such as sphingosine-1-phosphate, into fatty aldehydes and phosphoethanolamine. Possibly implicated in influencing the macrophage autophagy pathway. The polypeptide is Probable sphingosine-1-phosphate lyase (Legionella pneumophila subsp. pneumophila (strain Philadelphia 1 / ATCC 33152 / DSM 7513)).